The primary structure comprises 166 residues: NAD(P)H-quinone oxidoreductase subunit I, chloroplastic (166 aa).

4Fe-4S ferredoxin-type domains follow at residues 55 to 84 (GRIHFEFDKCIACEVCVRVCPIDLPVVDWK) and 95 to 124 (LNYSIDFGICIFCGNCVEYCPTNCLSMTEE). Residues Cys64, Cys67, Cys70, Cys74, Cys104, Cys107, Cys110, and Cys114 each contribute to the [4Fe-4S] cluster site.

This sequence belongs to the complex I 23 kDa subunit family. In terms of assembly, NDH is composed of at least 16 different subunits, 5 of which are encoded in the nucleus. It depends on [4Fe-4S] cluster as a cofactor.

The protein localises to the plastid. The protein resides in the chloroplast thylakoid membrane. The enzyme catalyses a plastoquinone + NADH + (n+1) H(+)(in) = a plastoquinol + NAD(+) + n H(+)(out). The catalysed reaction is a plastoquinone + NADPH + (n+1) H(+)(in) = a plastoquinol + NADP(+) + n H(+)(out). Functionally, NDH shuttles electrons from NAD(P)H:plastoquinone, via FMN and iron-sulfur (Fe-S) centers, to quinones in the photosynthetic chain and possibly in a chloroplast respiratory chain. The immediate electron acceptor for the enzyme in this species is believed to be plastoquinone. Couples the redox reaction to proton translocation, and thus conserves the redox energy in a proton gradient. The sequence is that of NAD(P)H-quinone oxidoreductase subunit I, chloroplastic from Hofmeisteria fasciculata (Helogyne fasciculata).